The sequence spans 150 residues: Ribonuclease H (150 aa).

Residues 1-141 (MKSIEVHTDG…VDVLARNQAI (141 aa)) enclose the RNase H type-1 domain. Positions 9, 47, 69, and 133 each coordinate Mg(2+).

The protein belongs to the RNase H family. In terms of assembly, monomer. The cofactor is Mg(2+).

The protein resides in the cytoplasm. The enzyme catalyses Endonucleolytic cleavage to 5'-phosphomonoester.. Its function is as follows. Endonuclease that specifically degrades the RNA of RNA-DNA hybrids. This is Ribonuclease H from Xanthomonas campestris pv. campestris (strain 8004).